Consider the following 416-residue polypeptide: Adenosylhomocysteinase (416 aa).

Residues threonine 55, aspartate 126, and glutamate 151 each contribute to the substrate site. Residue 152–154 participates in NAD(+) binding; sequence TTT. Positions 181 and 185 each coordinate substrate. NAD(+)-binding positions include asparagine 186, 215-220, glutamate 238, asparagine 273, 294-296, and asparagine 341; these read GYGWVG and AGH.

This sequence belongs to the adenosylhomocysteinase family. NAD(+) is required as a cofactor.

It localises to the cytoplasm. The catalysed reaction is S-adenosyl-L-homocysteine + H2O = L-homocysteine + adenosine. The protein operates within amino-acid biosynthesis; L-homocysteine biosynthesis; L-homocysteine from S-adenosyl-L-homocysteine: step 1/1. Its function is as follows. May play a key role in the regulation of the intracellular concentration of adenosylhomocysteine. The polypeptide is Adenosylhomocysteinase (Aeropyrum pernix (strain ATCC 700893 / DSM 11879 / JCM 9820 / NBRC 100138 / K1)).